The sequence spans 249 residues: 2,3-bisphosphoglycerate-dependent phosphoglycerate mutase (249 aa).

Residues Arg-8–Asn-15, Thr-21–Gly-22, Arg-60, Glu-87–Tyr-90, Lys-98, Arg-114–Arg-115, and Gly-183–Asn-184 contribute to the substrate site. Residue His-9 is the Tele-phosphohistidine intermediate of the active site. Glu-87 acts as the Proton donor/acceptor in catalysis.

Belongs to the phosphoglycerate mutase family. BPG-dependent PGAM subfamily.

The enzyme catalyses (2R)-2-phosphoglycerate = (2R)-3-phosphoglycerate. It functions in the pathway carbohydrate degradation; glycolysis; pyruvate from D-glyceraldehyde 3-phosphate: step 3/5. In terms of biological role, catalyzes the interconversion of 2-phosphoglycerate and 3-phosphoglycerate. The protein is 2,3-bisphosphoglycerate-dependent phosphoglycerate mutase of Caldanaerobacter subterraneus subsp. tengcongensis (strain DSM 15242 / JCM 11007 / NBRC 100824 / MB4) (Thermoanaerobacter tengcongensis).